Here is a 301-residue protein sequence, read N- to C-terminus: Thymidylate synthase (301 aa).

Residues Arg38 and Arg163–Arg164 contribute to the dUMP site. Cys183 acts as the Nucleophile in catalysis. DUMP is bound by residues Arg203 to Asp206, Asn214, and His244 to Tyr246. Residue Asp206 participates in (6R)-5,10-methylene-5,6,7,8-tetrahydrofolate binding. Ala300 is a binding site for (6R)-5,10-methylene-5,6,7,8-tetrahydrofolate.

This sequence belongs to the thymidylate synthase family. In terms of assembly, homodimer.

It carries out the reaction dUMP + (6R)-5,10-methylene-5,6,7,8-tetrahydrofolate = 7,8-dihydrofolate + dTMP. The protein operates within pyrimidine metabolism; dTTP biosynthesis. In terms of biological role, catalyzes the reductive methylation of deoxyuridylate to thymidylate. The sequence is that of Thymidylate synthase from Varicella-zoster virus (strain Dumas) (HHV-3).